We begin with the raw amino-acid sequence, 469 residues long: ABHD16B (469 aa).

The 125-residue stretch at 174–298 folds into the AB hydrolase-1 domain; it reads VICCEGNAGF…GLVVRTVREH (125 aa). Catalysis depends on charge relay system residues Ser-247, Asp-322, and His-418.

Belongs to the AB hydrolase superfamily. ABHD16 family.

The catalysed reaction is a 1,2-diacyl-sn-glycero-3-phospho-L-serine + H2O = a 2-acyl-sn-glycero-3-phospho-L-serine + a fatty acid + H(+). It catalyses the reaction a 1-acylglycerol + H2O = glycerol + a fatty acid + H(+). It carries out the reaction 1-(9Z-octadecenoyl)-glycerol + H2O = glycerol + (9Z)-octadecenoate + H(+). Its function is as follows. Hydrolyzes the sn-1 position of glycerophospholipids with high specificity towards phosphatidylserine (PS), PS-PLA1 enzyme. Also hydrolyzes the acyl chain of glycerolipids with a preference for the monoacylglycerol (MAG) 1-acylglycerol, MAG lipase. Plays a regulatory role in cellular lipid homeostasis by modulating genes involved in neutral lipid degradation and in phospholipid synthesis and composition. This is ABHD16B from Homo sapiens (Human).